A 29-amino-acid polypeptide reads, in one-letter code: Small toxic protein ZorO (29 aa).

Residues 10-27 (VLIAVLELLVALLRLIDL) form a helical membrane-spanning segment.

It localises to the cell inner membrane. In terms of biological role, toxic component of a type I toxin-antitoxin (TA) system. Expression in the absence of its cognate antitoxin (small sRNA orzO) leads to cell stasis and a decrease in colony-forming units. Repression of ZorO toxicity requires base pairing between zorO mRNA and sRNA OrzO, as well as RNase III (rnc), suggesting the mRNA is degraded. Base pairing occurs between 18 bases in the 5' UTR of zorO mRNA and the 5' end of OrzO sRNA. sRNA OrzP, which differs only in 4 of these 18 bases, does not repress ZorO toxicity. Integration of the protein into the inner membrane damages membrane integrity and affects membrane potential. It leads to increased levels of hydroxyl radicals. The protein is Small toxic protein ZorO of Escherichia coli O157:H7.